The following is a 355-amino-acid chain: Peptide chain release factor 1 (355 aa).

Gln-230 is subject to N5-methylglutamine.

It belongs to the prokaryotic/mitochondrial release factor family. Post-translationally, methylated by PrmC. Methylation increases the termination efficiency of RF1.

It localises to the cytoplasm. Functionally, peptide chain release factor 1 directs the termination of translation in response to the peptide chain termination codons UAG and UAA. The polypeptide is Peptide chain release factor 1 (Geotalea uraniireducens (strain Rf4) (Geobacter uraniireducens)).